The chain runs to 370 residues: 4-hydroxy-3-methylbut-2-en-1-yl diphosphate synthase (flavodoxin) (370 aa).

Residues Cys268, Cys271, Cys303, and Glu310 each contribute to the [4Fe-4S] cluster site.

This sequence belongs to the IspG family. [4Fe-4S] cluster serves as cofactor.

It catalyses the reaction (2E)-4-hydroxy-3-methylbut-2-enyl diphosphate + oxidized [flavodoxin] + H2O + 2 H(+) = 2-C-methyl-D-erythritol 2,4-cyclic diphosphate + reduced [flavodoxin]. It functions in the pathway isoprenoid biosynthesis; isopentenyl diphosphate biosynthesis via DXP pathway; isopentenyl diphosphate from 1-deoxy-D-xylulose 5-phosphate: step 5/6. Converts 2C-methyl-D-erythritol 2,4-cyclodiphosphate (ME-2,4cPP) into 1-hydroxy-2-methyl-2-(E)-butenyl 4-diphosphate. This chain is 4-hydroxy-3-methylbut-2-en-1-yl diphosphate synthase (flavodoxin), found in Bacillus cereus (strain B4264).